The chain runs to 181 residues: ADP-ribosylation factor 1 (181 aa).

A lipid anchor (N-myristoyl glycine) is attached at G2. The segment at N3–K16 is important for the stable binding to the membranes. Residues G24–T32, N126–D129, and A160 contribute to the GTP site.

This sequence belongs to the small GTPase superfamily. Arf family.

It localises to the golgi apparatus membrane. The enzyme catalyses GTP + H2O = GDP + phosphate + H(+). Its activity is regulated as follows. Alternates between an inactive GDP-bound form and an active GTP-bound form. Activated by a guanine nucleotide-exchange factor (GEF) and inactivated by GTPase-activating protein (GAP). Functionally, small GTPase involved in protein trafficking between different compartments. Modulates vesicle budding and uncoating within the Golgi complex. In its GTP-bound form, triggers the recruitment of coatomer proteins to the Golgi membrane. The hydrolysis of ARF1-bound GTP, which is mediated by ARFGAPs proteins, is required for dissociation of coat proteins from Golgi membranes and vesicles. This Xenopus laevis (African clawed frog) protein is ADP-ribosylation factor 1 (arf1).